A 419-amino-acid polypeptide reads, in one-letter code: Ribosome biogenesis protein WDR12 homolog (419 aa).

The interval 10–91 (VQVHLKTKQE…EDAIEIEYVE (82 aa)) is ubiquitin-like (UBL) domain. WD repeat units lie at residues 103–141 (LHDD…LTIP), 142–184 (GHTA…NTVE), 191–230 (GHER…AGEG), 249–287 (GHRE…IKAE), 289–328 (STNK…GSVV), 334–374 (GHNA…APLY), and 378–416 (GHGE…VENM).

It belongs to the WD repeat WDR12/YTM1 family.

The protein resides in the nucleus. It localises to the nucleolus. The protein localises to the nucleoplasm. Functionally, required for maturation of ribosomal RNAs and formation of the large ribosomal subunit. The polypeptide is Ribosome biogenesis protein WDR12 homolog (Drosophila pseudoobscura pseudoobscura (Fruit fly)).